A 506-amino-acid polypeptide reads, in one-letter code: Probable Xaa-Pro aminopeptidase BDCG_04966 (506 aa).

4 residues coordinate Mn(2+): aspartate 285, aspartate 296, glutamate 433, and glutamate 471.

This sequence belongs to the peptidase M24B family. Mn(2+) is required as a cofactor.

It catalyses the reaction Release of any N-terminal amino acid, including proline, that is linked to proline, even from a dipeptide or tripeptide.. Its function is as follows. Catalyzes the removal of a penultimate prolyl residue from the N-termini of peptides. The protein is Probable Xaa-Pro aminopeptidase BDCG_04966 of Ajellomyces dermatitidis (strain ER-3 / ATCC MYA-2586) (Blastomyces dermatitidis).